A 96-amino-acid polypeptide reads, in one-letter code: MKLRPMQDRIIVKRVEEETKTAGGIYIPETAKEKPQEGEVVAVGNGKRTEDGKILPLDVKVGDKVLFGKYSGTEVKVEGQDYLIMREDDILGVIEK.

The protein belongs to the GroES chaperonin family. In terms of assembly, heptamer of 7 subunits arranged in a ring. Interacts with the chaperonin GroEL.

The protein resides in the cytoplasm. Its function is as follows. Together with the chaperonin GroEL, plays an essential role in assisting protein folding. The GroEL-GroES system forms a nano-cage that allows encapsulation of the non-native substrate proteins and provides a physical environment optimized to promote and accelerate protein folding. GroES binds to the apical surface of the GroEL ring, thereby capping the opening of the GroEL channel. The protein is Co-chaperonin GroES of Geotalea daltonii (strain DSM 22248 / JCM 15807 / FRC-32) (Geobacter daltonii).